The following is a 435-amino-acid chain: Eukaryotic peptide chain release factor subunit 1 (435 aa).

This sequence belongs to the eukaryotic release factor 1 family. Heterodimer of two subunits, one of which binds GTP.

It is found in the cytoplasm. Directs the termination of nascent peptide synthesis (translation) in response to the termination codons UAA, UAG and UGA. This Podospora anserina (Pleurage anserina) protein is Eukaryotic peptide chain release factor subunit 1 (SU2).